The following is a 607-amino-acid chain: Matrix metalloproteinase-16 (607 aa).

The first 31 residues, 1 to 31, serve as a signal peptide directing secretion; that stretch reads MILLTFSTGRRLDFVHHSGVFFLQTLLWILC. Residues 32 to 119 constitute a propeptide that is removed on maturation; it reads ATVCGTEQYF…SSKFHIRRKR (88 aa). N83 is a glycosylation site (N-linked (GlcNAc...) asparagine). The Cysteine switch signature appears at 99–106; sequence PRCGVPDQ. C101 contacts Zn(2+). Residues 120–564 are Extracellular-facing; it reads YALTGQKWQH…LDNTASTVKA (445 aa). D183 contributes to the Ca(2+) binding site. 2 residues coordinate Zn(2+): H193 and D195. Residues D200, G201, G203, and F205 each contribute to the Ca(2+) site. Position 208 (H208) interacts with Zn(2+). 3 residues coordinate Ca(2+): G215, G217, and D219. H221 provides a ligand contact to Zn(2+). 2 residues coordinate Ca(2+): D223 and E226. H246 is a binding site for Zn(2+). The active site involves E247. Zn(2+)-binding residues include H250 and H256. A disordered region spans residues 281–340; the sequence is DDLQGIQKIYGPPDKIPPPTRPLPTVPPHRSIPPADPRKNDRPKPPRPPTGRPSYPGAKP. Over residues 294-315 the composition is skewed to pro residues; sequence DKIPPPTRPLPTVPPHRSIPPA. Hemopexin repeat units follow at residues 340–388, 389–434, 436–484, and 485–532; these read PNIC…WRGL, PPSI…GSGI, PHGI…KGIP, and ESPQ…FMGC. C343 and C532 are disulfide-bonded. Residues 565-585 traverse the membrane as a helical segment; that stretch reads IAIVIPCILALCLLVLVYTVF. The Cytoplasmic segment spans residues 586-607; it reads QFKRKGTPRHILYCKRSMQEWV.

It belongs to the peptidase M10A family. As to quaternary structure, interacts with CSPG4 through CSPG4 chondroitin sulfate glycosaminoglycan. Zn(2+) serves as cofactor. Ca(2+) is required as a cofactor. Post-translationally, the precursor is cleaved by a furin endopeptidase. As to expression, expressed in heart, brain, placenta, ovary and small intestine. Isoform Short is found in the ovary.

It localises to the cell membrane. The protein resides in the secreted. Its subcellular location is the extracellular space. It is found in the extracellular matrix. The protein localises to the cell surface. Its activity is regulated as follows. TIMP-2 shows little inhibitory activity compared to TIMP-1. TIMP-1 seems to have less binding affinity than TIMP-2 for the short isoform. Functionally, endopeptidase that degrades various components of the extracellular matrix, such as collagen type III and fibronectin. Activates progelatinase A. Involved in the matrix remodeling of blood vessels. Isoform short cleaves fibronectin and also collagen type III, but at lower rate. It has no effect on type I, II, IV and V collagen. However, upon interaction with CSPG4, it may be involved in degradation and invasion of type I collagen by melanoma cells. The polypeptide is Matrix metalloproteinase-16 (Homo sapiens (Human)).